The following is a 453-amino-acid chain: Gamma-aminobutyric acid receptor subunit alpha-6 (453 aa).

A signal peptide spans 1–19 (MASSLPWLCIILWLENALG). Topologically, residues 20 to 243 (KLEVEGNFYS…FHLQRKMGYF (224 aa)) are extracellular. A glycan (N-linked (GlcNAc...) asparagine) is linked at N31. R84 serves as a coordination point for 4-aminobutanoate. Residues N128 and N141 are each glycosylated (N-linked (GlcNAc...) asparagine). T147 serves as a coordination point for 4-aminobutanoate. C156 and C170 are joined by a disulfide. Residues 244–264 (MIQIYTPCIMTVILSQVSFWI) traverse the membrane as a helical segment. The Cytoplasmic portion of the chain corresponds to 265–270 (NKESVP). A helical transmembrane segment spans residues 271–290 (ARTVFGITTVLTMTTLSISA). Residues 291–304 (RHSLPKVSYATAMD) are Extracellular-facing. A helical membrane pass occupies residues 305–325 (WFIAVCFAFVFSALIEFAAVN). At 326–422 (YFTNLQTQKA…GTSKIDQYSR (97 aa)) the chain is on the cytoplasmic side. A Phosphothreonine modification is found at T403. A helical membrane pass occupies residues 423–443 (ILFPVAFAGFNLVYWVVYLSK). At 444–453 (DTMEVSSSVE) the chain is on the extracellular side.

Belongs to the ligand-gated ion channel (TC 1.A.9) family. Gamma-aminobutyric acid receptor (TC 1.A.9.5) subfamily. GABRA6 sub-subfamily. Heteropentamer, formed by a combination of alpha (GABRA1-6), beta (GABRB1-3), gamma (GABRG1-3), delta (GABRD), epsilon (GABRE), rho (GABRR1-3), pi (GABRP) and theta (GABRQ) chains, each subunit exhibiting distinct physiological and pharmacological properties. Binds UBQLN1. Expressed in brain, in cerebellar granule cells.

It is found in the postsynaptic cell membrane. Its subcellular location is the cell membrane. It catalyses the reaction chloride(in) = chloride(out). Alpha subunit of the heteropentameric ligand-gated chloride channel gated by gamma-aminobutyric acid (GABA), a major inhibitory neurotransmitter in the brain. GABA-gated chloride channels, also named GABA(A) receptors (GABAAR), consist of five subunits arranged around a central pore and contain GABA active binding site(s) located at the alpha and beta subunit interface(s). When activated by GABA, GABAARs selectively allow the flow of chloride anions across the cell membrane down their electrochemical gradient. Alpha-6/GABRA6 subunits are found at both synaptic and extrasynaptic sites. Chloride influx into the postsynaptic neuron following GABAAR opening decreases the neuron ability to generate a new action potential, thereby reducing nerve transmission. Extrasynaptic alpha-6-containing receptors contribute to the tonic GABAergic inhibition. Alpha-6 subunits are also present on glutamatergic synapses. This chain is Gamma-aminobutyric acid receptor subunit alpha-6, found in Homo sapiens (Human).